Here is a 215-residue protein sequence, read N- to C-terminus: Cytidylate kinase (215 aa).

10-18 (GPAAAGKST) lines the ATP pocket.

This sequence belongs to the cytidylate kinase family. Type 1 subfamily.

The protein resides in the cytoplasm. It carries out the reaction CMP + ATP = CDP + ADP. It catalyses the reaction dCMP + ATP = dCDP + ADP. The chain is Cytidylate kinase from Staphylococcus epidermidis (strain ATCC 35984 / DSM 28319 / BCRC 17069 / CCUG 31568 / BM 3577 / RP62A).